The sequence spans 77 residues: Small ribosomal subunit protein uS4 (77 aa).

The segment at 45–77 is disordered; it reads PFGGGRPGRVKRKNQKAAAKKASGGDGDEEDEE. Residues 52–63 show a composition bias toward basic residues; it reads GRVKRKNQKAAA.

It belongs to the universal ribosomal protein uS4 family.

This chain is Small ribosomal subunit protein uS4 (RPS9), found in Nicotiana tabacum (Common tobacco).